We begin with the raw amino-acid sequence, 172 residues long: Putative phosphoesterase BT9727_1129 (172 aa).

His34 (proton donor) is an active-site residue. Short sequence motifs (HXTX) lie at residues 34–37 (HITL) and 115–118 (HLTI). The active-site Proton acceptor is His115.

It belongs to the 2H phosphoesterase superfamily. YjcG family.

The protein is Putative phosphoesterase BT9727_1129 of Bacillus thuringiensis subsp. konkukian (strain 97-27).